Consider the following 296-residue polypeptide: Large ribosomal subunit protein uL15m (296 aa).

The N-terminal 20 residues, 1 to 20 (MSLIKKPGGKTIEVVKNLPR), are a transit peptide targeting the mitochondrion. The tract at residues 25-59 (NLRPNPGAKTLEKRRGRGMHGGNRSGWGHKGERQR) is disordered.

The protein belongs to the universal ribosomal protein uL15 family. In terms of assembly, component of the mitochondrial ribosome large subunit (39S) which comprises a 16S rRNA and about 50 distinct proteins.

It localises to the mitochondrion. The sequence is that of Large ribosomal subunit protein uL15m (mrpl15) from Danio rerio (Zebrafish).